The following is a 139-amino-acid chain: Ribonuclease VapC39 (139 aa).

In terms of domain architecture, PINc spans 4-133 (LLDVNVLIAL…DAALADSASA (130 aa)). Residues Asp-6 and Asp-106 each contribute to the Mg(2+) site.

This sequence belongs to the PINc/VapC protein family. Mg(2+) is required as a cofactor.

Its function is as follows. Toxic component of a type II toxin-antitoxin (TA) system. An RNase. Its toxic effect is neutralized by coexpression with cognate antitoxin VapB39. The protein is Ribonuclease VapC39 of Mycobacterium tuberculosis (strain CDC 1551 / Oshkosh).